A 95-amino-acid chain; its full sequence is Co-chaperonin GroES (95 aa).

The protein belongs to the GroES chaperonin family. As to quaternary structure, heptamer of 7 subunits arranged in a ring. Interacts with the chaperonin GroEL.

The protein resides in the cytoplasm. Functionally, together with the chaperonin GroEL, plays an essential role in assisting protein folding. The GroEL-GroES system forms a nano-cage that allows encapsulation of the non-native substrate proteins and provides a physical environment optimized to promote and accelerate protein folding. GroES binds to the apical surface of the GroEL ring, thereby capping the opening of the GroEL channel. The chain is Co-chaperonin GroES from Alkalilimnicola ehrlichii (strain ATCC BAA-1101 / DSM 17681 / MLHE-1).